The chain runs to 395 residues: Putative gustatory receptor 93b (395 aa).

Topologically, residues 1–18 are cytoplasmic; it reads MSGLLVMPRILRCLNVSR. The chain crosses the membrane as a helical span at residues 19-39; the sequence is ISAILLRSCFLYGTFFGVITF. Topologically, residues 40-89 are extracellular; that stretch reads RIERKDSQLVAINRRGYLWICLVIRLLASCFYGYSYDAWSGQYEDMYLRA. Residues 90–110 form a helical membrane-spanning segment; that stretch reads FFGFRLIGCLICSVIILVMQF. Residues 111–153 lie on the Cytoplasmic side of the membrane; the sequence is WFGEELINLVNRFLQLFRRMQSLTNSPKNRFGDRAEFLLMFSK. The helical transmembrane segment at 154–174 threads the bilayer; sequence VFSLLFVFMAFRLMLSPWFLL. The Extracellular segment spans residues 175-183; it reads TLVCDLYTS. Residues 184 to 204 form a helical membrane-spanning segment; sequence VGTGMITHLCFVGYLSIGVLY. At 205–267 the chain is on the cytoplasmic side; the sequence is RDLNNYVDCQ…RSFQQLFDLP (63 aa). The chain crosses the membrane as a helical span at residues 268–288; sequence LFLSLAQSLLAMSMVSYHAIL. At 289 to 293 the chain is on the extracellular side; it reads RRQYS. A helical membrane pass occupies residues 294–314; sequence FNLWGLVIKLLIDVVLLTMSV. Residues 315 to 369 lie on the Cytoplasmic side of the membrane; the sequence is HSAVNGSRLIRRLSFENFYVTDSQSYHQKLELFLGRLQHQELRVFPLGLFEVSNE. Residues 370–390 form a helical membrane-spanning segment; it reads LTLFFLSAMVTYLVFLVQYGM. At 391–395 the chain is on the extracellular side; that stretch reads QSQQI.

It belongs to the insect chemoreceptor superfamily. Gustatory receptor (GR) family. Gr93a subfamily. In terms of tissue distribution, in larvae, is expressed in neurons of the terminal external chemosensory organ and of the dorsal pharyngeal sense organ.

The protein localises to the cell membrane. In terms of biological role, probable gustatory receptor which mediates acceptance or avoidance behavior, depending on its substrates. This chain is Putative gustatory receptor 93b (Gr93b), found in Drosophila melanogaster (Fruit fly).